Reading from the N-terminus, the 684-residue chain is Galactocerebrosidase (684 aa).

The signal sequence occupies residues 1–42; that stretch reads MANSQPKASQQRQAKVMTAAAGSASRVAVPLLLCALLVPGGA. Residues Thr-109, Trp-151, and Asn-197 each coordinate substrate. The active-site Proton donor/acceptor is Glu-198. Glu-274 functions as the Nucleophile in the catalytic mechanism. Residues Cys-287 and Cys-394 are joined by a disulfide bond. N-linked (GlcNAc...) asparagine glycosylation is found at Asn-300 and Asn-379. Arg-396 is a substrate binding site. Residues Asn-403, Asn-558, Asn-601, and Asn-645 are each glycosylated (N-linked (GlcNAc...) asparagine).

It belongs to the glycosyl hydrolase 59 family. In terms of tissue distribution, detected in brain and kidney.

It localises to the lysosome. It catalyses the reaction a beta-D-galactosyl-(1&lt;-&gt;1')-N-acylsphing-4-enine + H2O = an N-acylsphing-4-enine + D-galactose. It carries out the reaction a D-galactosylceramide + H2O = an N-acyl-sphingoid base + D-galactose. The enzyme catalyses beta-D-galactosyl-(1&lt;-&gt;1)-sphing-4-enine + H2O = sphing-4-enine + D-galactose. Its function is as follows. Hydrolyzes the galactose ester bonds of glycolipids such as galactosylceramide and galactosylsphingosine. Enzyme with very low activity responsible for the lysosomal catabolism of galactosylceramide, a major lipid in myelin, kidney and epithelial cells of small intestine and colon. The polypeptide is Galactocerebrosidase (Mus musculus (Mouse)).